Reading from the N-terminus, the 695-residue chain is Protein arginine N-methyltransferase 7 (695 aa).

2 consecutive SAM-dependent MTase PRMT-type domains span residues 14 to 345 and 358 to 684; these read SVEW…YCVW and RVHP…ITMD. R32 carries the post-translational modification Omega-N-methylarginine. Active-site residues include E144 and E153.

It belongs to the class I-like SAM-binding methyltransferase superfamily. Protein arginine N-methyltransferase family. PRMT7 subfamily. Homodimer and heterodimer. Interacts with CTCFL, PRMT5 and SNRPD3.

Its subcellular location is the cytoplasm. The protein resides in the cytosol. It localises to the nucleus. It carries out the reaction L-arginyl-[protein] + S-adenosyl-L-methionine = N(omega)-methyl-L-arginyl-[protein] + S-adenosyl-L-homocysteine + H(+). Its function is as follows. Arginine methyltransferase that can both catalyze the formation of omega-N monomethylarginine (MMA) and symmetrical dimethylarginine (sDMA), with a preference for the formation of MMA. Specifically mediates the symmetrical dimethylation of arginine residues in the small nuclear ribonucleoproteins Sm D1 (SNRPD1) and Sm D3 (SNRPD3); such methylation being required for the assembly and biogenesis of snRNP core particles. Specifically mediates the symmetric dimethylation of histone H4 'Arg-3' to form H4R3me2s. Plays a role in gene imprinting by being recruited by CTCFL at the H19 imprinted control region (ICR) and methylating histone H4 to form H4R3me2s, possibly leading to recruit DNA methyltransferases at these sites. May also play a role in embryonic stem cell (ESC) pluripotency. Also able to mediate the arginine methylation of histone H2A and myelin basic protein (MBP) in vitro; the relevance of such results is however unclear in vivo. This is Protein arginine N-methyltransferase 7 (PRMT7) from Bos taurus (Bovine).